Reading from the N-terminus, the 91-residue chain is Large ribosomal subunit protein eL34 (91 aa).

The segment at 48–71 (RGRPVEMRKLPKTKKRPERPYPHL) is disordered.

It belongs to the eukaryotic ribosomal protein eL34 family.

This is Large ribosomal subunit protein eL34 (rpl34e) from Pyrococcus abyssi (strain GE5 / Orsay).